The sequence spans 640 residues: MPILEKAPQKMPVKASSWEELDLPKLPVPPLQQTLATYLQCMQHLVPEEQFRKSQAIVKRFGAPGGLGETLQEKLLERQEKTANWVSEYWLNDMYLNNRLALPVNSSPAVIFARQHFQDTNDQLRFAACLISGVLSYKTLLDSHSLPTDWAKGQLSGQPLCMKQYYRLFSSYRLPGHTQDTLVAQKSSIMPEPEHVIVACCNQFFVLDVVINFRRLSEGDLFTQLRKIVKMASNEDERLPPIGLLTSDGRSEWAKARTVLLKDSTNRDSLDMIERCICLVCLDGPGTGELSDTHRALQLLHGGGCSLNGANRWYDKSLQFVVGRDGTCGVVCEHSPFDGIVLVQCTEHLLKHMMTSNKKLVRADSVSELPAPRRLRLKCSPETQGHLASSAEKLQRIVKNLDFIVYKFDNYGKTFIKKQKYSPDGFIQVALQLAYYRLYQRLVPTYESASIRRFQEGRVDNIRSATPEALAFVQAMTDHKAAMPASEKLQLLQTAMQAHKQYTVMAITGMAIDNHLLALRELARDLCKEPPEMFMDETYLMSNRFVLSTSQVPTTMEMFCCYGPVVPNGNGACYNPQPEAITFCISSFHSCKETSSVEFAEAVGASLVDMRDLCSSRQPADSKPPAPKEKARGPSQAKQS.

Ser-17 carries the phosphoserine modification. His-334 acts as the Proton acceptor in catalysis. At Ser-365 the chain carries Phosphoserine. Residues 412-424, Ser-450, and Gln-551 each bind CoA; that span reads GKTFIKKQKYSPD. The tract at residues 614 to 640 is disordered; it reads CSSRQPADSKPPAPKEKARGPSQAKQS.

Belongs to the carnitine/choline acetyltransferase family. Monomer.

The catalysed reaction is choline + acetyl-CoA = acetylcholine + CoA. Functionally, catalyzes the reversible synthesis of acetylcholine (ACh) from acetyl CoA and choline at cholinergic synapses. This Rattus norvegicus (Rat) protein is Choline O-acetyltransferase (Chat).